We begin with the raw amino-acid sequence, 217 residues long: 3,4-dihydroxy-2-butanone 4-phosphate synthase (217 aa).

D-ribulose 5-phosphate is bound by residues 37-38, Asp42, 150-154, and Glu174; these read RE and RGGHT. Residue Glu38 participates in Mg(2+) binding. His153 contacts Mg(2+).

The protein belongs to the DHBP synthase family. In terms of assembly, homodimer. Mg(2+) serves as cofactor. It depends on Mn(2+) as a cofactor.

The catalysed reaction is D-ribulose 5-phosphate = (2S)-2-hydroxy-3-oxobutyl phosphate + formate + H(+). It functions in the pathway cofactor biosynthesis; riboflavin biosynthesis; 2-hydroxy-3-oxobutyl phosphate from D-ribulose 5-phosphate: step 1/1. In terms of biological role, catalyzes the conversion of D-ribulose 5-phosphate to formate and 3,4-dihydroxy-2-butanone 4-phosphate. The protein is 3,4-dihydroxy-2-butanone 4-phosphate synthase of Shigella boydii serotype 18 (strain CDC 3083-94 / BS512).